A 598-amino-acid chain; its full sequence is MDESHIRNFAIIAHIDHGKSTLADRLIEECNGLDEREMKDQVLDSMDIERERGITIKAQTVRLAYKAKDGQTYYLNLMDTPGHVDFSYEVSRSLAACEGSLLIVDSSQGVEAQTLANVYKAIDSNHEIIPVLNKIDLASSDPDKVKLQIEDMIGIDASESLLVSAKSGIGIQDVLEAIVSRLPAPSGKSENPLKAILVDTWYDTYLGIVILLRIKDGVIRKGMKIVMMSNNAVYQVDNVGIFTPHKKVVDQLSVGEIGFITASIKELSDCKVGDTITEEQRRCSEPLPGFRTIHPVVFCSIFPNEAGEFERLREALKKLQLNDASFTFEIEVSNALGYGFRCGFLGMLHLEVIQERLEREFNLDLTATAPGVIYQVTTRSGDVRKVHNPHDFGESQDIANIKEPWICATIMVPDQYLGVIMSLCNNKRGEKLDLSYSGNTALLKYRLPLSEVVFDFYDRIKSMSKGYASLDWEMDEYLDSEIAKLSILINSEPVDALACIIHKSKVEQRGREICLRLKDLIPRQQYKIAIQAAVGGRIVARETISPYRKDVTAKLYGGDVTRRMKLLEKQKKGKKRLRSIGNVNVPHNAFIQALKIID.

Residues 4–186 (SHIRNFAIIA…AIVSRLPAPS (183 aa)) form the tr-type G domain. Residues 16-21 (DHGKST) and 133-136 (NKID) each bind GTP.

Belongs to the TRAFAC class translation factor GTPase superfamily. Classic translation factor GTPase family. LepA subfamily.

The protein resides in the cell inner membrane. It catalyses the reaction GTP + H2O = GDP + phosphate + H(+). In terms of biological role, required for accurate and efficient protein synthesis under certain stress conditions. May act as a fidelity factor of the translation reaction, by catalyzing a one-codon backward translocation of tRNAs on improperly translocated ribosomes. Back-translocation proceeds from a post-translocation (POST) complex to a pre-translocation (PRE) complex, thus giving elongation factor G a second chance to translocate the tRNAs correctly. Binds to ribosomes in a GTP-dependent manner. This Ehrlichia chaffeensis (strain ATCC CRL-10679 / Arkansas) protein is Elongation factor 4.